The following is a 277-amino-acid chain: Undecaprenyl-diphosphatase (277 aa).

Transmembrane regions (helical) follow at residues Phe19–Gly39, Phe44–Tyr64, Phe89–Ala109, Leu122–Trp142, Ile154–Met174, Ala195–Ile215, Asn224–Ile244, and Ser257–Ile277.

It belongs to the UppP family.

It localises to the cell inner membrane. It catalyses the reaction di-trans,octa-cis-undecaprenyl diphosphate + H2O = di-trans,octa-cis-undecaprenyl phosphate + phosphate + H(+). Catalyzes the dephosphorylation of undecaprenyl diphosphate (UPP). Confers resistance to bacitracin. The protein is Undecaprenyl-diphosphatase of Leptospira interrogans serogroup Icterohaemorrhagiae serovar copenhageni (strain Fiocruz L1-130).